The chain runs to 297 residues: tRNA dimethylallyltransferase (297 aa).

Position 10–17 (10–17 (APTGAGKT)) interacts with ATP. Residue 12–17 (TGAGKT) participates in substrate binding. The interval 34 to 37 (DSRQ) is interaction with substrate tRNA.

It belongs to the IPP transferase family. Monomer. It depends on Mg(2+) as a cofactor.

The enzyme catalyses adenosine(37) in tRNA + dimethylallyl diphosphate = N(6)-dimethylallyladenosine(37) in tRNA + diphosphate. Its function is as follows. Catalyzes the transfer of a dimethylallyl group onto the adenine at position 37 in tRNAs that read codons beginning with uridine, leading to the formation of N6-(dimethylallyl)adenosine (i(6)A). This is tRNA dimethylallyltransferase from Leptospira interrogans serogroup Icterohaemorrhagiae serovar Lai (strain 56601).